The sequence spans 308 residues: KH domain-containing protein At4g26480 (308 aa).

The disordered stretch occupies residues methionine 1–valine 26. Residues leucine 7–arginine 24 are compositionally biased toward gly residues. The region spanning aspartate 165–leucine 232 is the KH domain. Residues glutamate 284 to glycine 308 are disordered. A Phosphoserine modification is found at serine 294.

The protein localises to the nucleus. The chain is KH domain-containing protein At4g26480 from Arabidopsis thaliana (Mouse-ear cress).